The following is a 510-amino-acid chain: MITLDRPTLTARALEDLTASALVVGVGTGPDGPVLLTDALPAEAATALEASFELLGVRGAEDEVHRLPGLGGVPVPLLVLAGVGGLDDDGEASDESLRRAAGAAVRSLAGTDAVALALPADTPARLAAVAEGAVLGAYAFTAQKSECARAEADSSRPVRELEVVTPLAAADADPVLRRAAVVGDAVCAVRDLVNTAPSHLYPATFADAVAEDLADSPVSVDVWDEDRLRAEGFGGILAIGQGSSRPPRLVRIEHAPADAAAHIALVGKGITFDTGGISLKPAASMMTMKSDMAGAATVFAVVRAAAALDVPVKVTGWLALAENMPSGTAIRPSDVITMYGGKTVEVMNTDAEGRVVMADALVAATNEHPDAVLDVATLTGAQLVALGVRHTGVMGDDALRDEAVAAADAAGELAWGMPLPEQLRASLTSRVADISNMGDRFGGMMTAATFLREFVDAGRPQDDDAARTPWAHLDIAGPSFNESAAYGYTPQDATGVMVRTLVGLIEGRAR.

2 residues coordinate Mn(2+): K268 and D273. K280 is an active-site residue. D291, D350, and E352 together coordinate Mn(2+). Residue R354 is part of the active site.

It belongs to the peptidase M17 family. It depends on Mn(2+) as a cofactor.

Its subcellular location is the cytoplasm. The catalysed reaction is Release of an N-terminal amino acid, Xaa-|-Yaa-, in which Xaa is preferably Leu, but may be other amino acids including Pro although not Arg or Lys, and Yaa may be Pro. Amino acid amides and methyl esters are also readily hydrolyzed, but rates on arylamides are exceedingly low.. It carries out the reaction Release of an N-terminal amino acid, preferentially leucine, but not glutamic or aspartic acids.. In terms of biological role, presumably involved in the processing and regular turnover of intracellular proteins. Catalyzes the removal of unsubstituted N-terminal amino acids from various peptides. This is Probable cytosol aminopeptidase from Micrococcus luteus (strain ATCC 4698 / DSM 20030 / JCM 1464 / CCM 169 / CCUG 5858 / IAM 1056 / NBRC 3333 / NCIMB 9278 / NCTC 2665 / VKM Ac-2230) (Micrococcus lysodeikticus).